We begin with the raw amino-acid sequence, 645 residues long: Translation factor GUF1 homolog, mitochondrial (645 aa).

The tr-type G domain maps to E40 to T215. GTP is bound by residues A49–S56, D108–H112, and N162–D165.

This sequence belongs to the TRAFAC class translation factor GTPase superfamily. Classic translation factor GTPase family. LepA subfamily.

The protein resides in the mitochondrion inner membrane. It carries out the reaction GTP + H2O = GDP + phosphate + H(+). Functionally, promotes mitochondrial protein synthesis. May act as a fidelity factor of the translation reaction, by catalyzing a one-codon backward translocation of tRNAs on improperly translocated ribosomes. Binds to mitochondrial ribosomes in a GTP-dependent manner. This chain is Translation factor GUF1 homolog, mitochondrial, found in Caenorhabditis briggsae.